A 310-amino-acid polypeptide reads, in one-letter code: p-hydroxybenzoic acid efflux pump subunit AaeA (310 aa).

The chain crosses the membrane as a helical span at residues 12 to 32; the sequence is AITLVLVILAFIAIFRAWVYY.

The protein belongs to the membrane fusion protein (MFP) (TC 8.A.1) family.

It is found in the cell inner membrane. Functionally, forms an efflux pump with AaeB. This chain is p-hydroxybenzoic acid efflux pump subunit AaeA, found in Salmonella arizonae (strain ATCC BAA-731 / CDC346-86 / RSK2980).